Here is a 384-residue protein sequence, read N- to C-terminus: dTDP-dihydrostreptose--streptidine-6-phosphate dihydrostreptosyltransferase (384 aa).

The catalysed reaction is dTDP-L-dihydrostreptose + streptidine 6-phosphate = O-(1-&gt;4)-alpha-L-dihydrostreptosyl-streptidine 6-phosphate + dTDP + H(+). Its pathway is antibiotic biosynthesis; streptomycin biosynthesis. In terms of biological role, is probably a dihydrostreptosyl glycosyltransferase, involved in the first glycosylation step condensing streptidine-6-phosphate and dihydrostreptose. In Streptomyces griseus, this protein is dTDP-dihydrostreptose--streptidine-6-phosphate dihydrostreptosyltransferase (strH).